The sequence spans 213 residues: GTP-binding protein yptV4 (213 aa).

13-21 (GDTGVGKSC) contributes to the GTP binding site. Positions 35–43 (HDLTIGVEF) match the Effector region motif. GTP-binding positions include 61-65 (DTAGQ), 119-122 (NKCD), and 149-151 (SAR). A disordered region spans residues 194–213 (AGPQAAKPGEGDARKSSSCC). The segment covering 202 to 213 (GEGDARKSSSCC) has biased composition (basic and acidic residues). Residues Cys212 and Cys213 are each lipidated (S-geranylgeranyl cysteine).

This sequence belongs to the small GTPase superfamily. Rab family.

The protein localises to the cell membrane. In terms of biological role, protein transport. Probably involved in vesicular traffic. This chain is GTP-binding protein yptV4 (YPTV4), found in Volvox carteri (Green alga).